We begin with the raw amino-acid sequence, 296 residues long: Uridine phosphorylase A (296 aa).

Phosphate-binding positions include G46, R77, and 121–124 (RLGT). Residues 125–126 (SG) and 201–203 (QGR) contribute to the uridine site.

The protein belongs to the PNP/UDP phosphorylase family. As to quaternary structure, homodimer.

The enzyme catalyses uridine + phosphate = alpha-D-ribose 1-phosphate + uracil. It participates in pyrimidine metabolism; UMP biosynthesis via salvage pathway; uracil from uridine (phosphorylase route): step 1/1. In terms of biological role, catalyzes the reversible phosphorylytic cleavage of uridine and deoxyuridine to uracil and ribose- or deoxyribose-1-phosphate. The produced molecules are then utilized as carbon and energy sources or in the rescue of pyrimidine bases for nucleotide synthesis. The polypeptide is Uridine phosphorylase A (Schistosoma mansoni (Blood fluke)).